The primary structure comprises 443 residues: ATP-dependent protease ATPase subunit HslU (443 aa).

ATP is bound by residues Ile18, 60–65 (GVGKTE), Asp256, Glu321, and Arg393.

Belongs to the ClpX chaperone family. HslU subfamily. As to quaternary structure, a double ring-shaped homohexamer of HslV is capped on each side by a ring-shaped HslU homohexamer. The assembly of the HslU/HslV complex is dependent on binding of ATP.

It is found in the cytoplasm. Its function is as follows. ATPase subunit of a proteasome-like degradation complex; this subunit has chaperone activity. The binding of ATP and its subsequent hydrolysis by HslU are essential for unfolding of protein substrates subsequently hydrolyzed by HslV. HslU recognizes the N-terminal part of its protein substrates and unfolds these before they are guided to HslV for hydrolysis. This is ATP-dependent protease ATPase subunit HslU from Buchnera aphidicola subsp. Acyrthosiphon pisum (strain APS) (Acyrthosiphon pisum symbiotic bacterium).